The chain runs to 133 residues: Ribonucleases P/MRP protein subunit POP8 (133 aa).

As to quaternary structure, component of nuclear RNase P and RNase MRP complexes. RNase P consists of an RNA moiety and at least 9 protein subunits including POP1, POP3, POP4, POP5, POP6, POP7, POP8, RPP1 and RPR2. RNase MRP complex consists of an RNA moiety and at least 10 protein subunits including POP1, POP3, POP4, POP5, POP6, POP7, POP8, RMP1, RPP1 and SNM1, many of which are shared with the RNase P complex.

It localises to the nucleus. It catalyses the reaction Endonucleolytic cleavage of RNA, removing 5'-extranucleotides from tRNA precursor.. Its function is as follows. Component of ribonuclease P, a protein complex that generates mature tRNA molecules by cleaving their 5'-ends. Also a component of RNase MRP, which cleaves pre-rRNA sequences. The sequence is that of Ribonucleases P/MRP protein subunit POP8 (POP8) from Saccharomyces cerevisiae (strain ATCC 204508 / S288c) (Baker's yeast).